Reading from the N-terminus, the 216-residue chain is Pyridoxine/pyridoxamine 5'-phosphate oxidase (216 aa).

Residues 12–15 (RKSY) and Lys70 each bind substrate. Residues 65 to 70 (RVVLVK), 80 to 81 (FT), Arg86, and Lys87 each bind FMN. Substrate is bound by residues Tyr127, Arg131, and Ser135. FMN is bound by residues 144 to 145 (QS) and Trp188. 194–196 (RLH) contacts substrate. Arg198 contacts FMN.

It belongs to the pyridoxamine 5'-phosphate oxidase family. Homodimer. Requires FMN as cofactor.

The catalysed reaction is pyridoxamine 5'-phosphate + O2 + H2O = pyridoxal 5'-phosphate + H2O2 + NH4(+). It catalyses the reaction pyridoxine 5'-phosphate + O2 = pyridoxal 5'-phosphate + H2O2. It functions in the pathway cofactor metabolism; pyridoxal 5'-phosphate salvage; pyridoxal 5'-phosphate from pyridoxamine 5'-phosphate: step 1/1. The protein operates within cofactor metabolism; pyridoxal 5'-phosphate salvage; pyridoxal 5'-phosphate from pyridoxine 5'-phosphate: step 1/1. Functionally, catalyzes the oxidation of either pyridoxine 5'-phosphate (PNP) or pyridoxamine 5'-phosphate (PMP) into pyridoxal 5'-phosphate (PLP). The protein is Pyridoxine/pyridoxamine 5'-phosphate oxidase of Polaromonas sp. (strain JS666 / ATCC BAA-500).